Consider the following 91-residue polypeptide: Small ribosomal subunit protein bS20 (91 aa).

The span at 1–21 shows a compositional bias: basic and acidic residues; that stretch reads MPLHKSAEKRLRQAARRNERN. Positions 1–24 are disordered; sequence MPLHKSAEKRLRQAARRNERNRAR.

This sequence belongs to the bacterial ribosomal protein bS20 family.

In terms of biological role, binds directly to 16S ribosomal RNA. This chain is Small ribosomal subunit protein bS20, found in Chlorobaculum parvum (strain DSM 263 / NCIMB 8327) (Chlorobium vibrioforme subsp. thiosulfatophilum).